The chain runs to 615 residues: Proteasome-associated ATPase (615 aa).

The segment at 1 to 36 (MSESERPEAGDGTDALGASPDTPLSSEDAAELEQLR) is disordered. Residues 25–102 (SSEDAAELEQ…LREEVDRLGQ (78 aa)) are a coiled coil. Residue 302–307 (GCGKTL) coordinates ATP. The docks into pockets in the proteasome alpha-ring stretch occupies residues 614-615 (YL).

It belongs to the AAA ATPase family. In terms of assembly, homohexamer. Assembles into a hexameric ring structure that caps the 20S proteasome core. Strongly interacts with the prokaryotic ubiquitin-like protein Pup through a hydrophobic interface; the interacting region of ARC lies in its N-terminal coiled-coil domain. There is one Pup binding site per ARC hexamer ring. Upon ATP-binding, the C-terminus of ARC interacts with the alpha-rings of the proteasome core, possibly by binding to the intersubunit pockets.

It functions in the pathway protein degradation; proteasomal Pup-dependent pathway. ATPase which is responsible for recognizing, binding, unfolding and translocation of pupylated proteins into the bacterial 20S proteasome core particle. May be essential for opening the gate of the 20S proteasome via an interaction with its C-terminus, thereby allowing substrate entry and access to the site of proteolysis. Thus, the C-termini of the proteasomal ATPase may function like a 'key in a lock' to induce gate opening and therefore regulate proteolysis. This Mycolicibacterium gilvum (strain PYR-GCK) (Mycobacterium gilvum (strain PYR-GCK)) protein is Proteasome-associated ATPase.